We begin with the raw amino-acid sequence, 90 residues long: uncharacterized protein (90 aa).

Residues 1–20 (MAYKMLQVVLCSTLLIGALG) form the signal peptide.

This is an uncharacterized protein from Homo sapiens (Human).